Consider the following 327-residue polypeptide: Beta-ketoacyl-[acyl-carrier-protein] synthase III (327 aa).

Active-site residues include cysteine 112 and histidine 253. The ACP-binding stretch occupies residues glutamine 254 to arginine 258. Asparagine 283 is an active-site residue.

It belongs to the thiolase-like superfamily. FabH family. As to quaternary structure, homodimer.

The protein resides in the cytoplasm. It catalyses the reaction malonyl-[ACP] + acetyl-CoA + H(+) = 3-oxobutanoyl-[ACP] + CO2 + CoA. Its pathway is lipid metabolism; fatty acid biosynthesis. Its function is as follows. Catalyzes the condensation reaction of fatty acid synthesis by the addition to an acyl acceptor of two carbons from malonyl-ACP. Catalyzes the first condensation reaction which initiates fatty acid synthesis and may therefore play a role in governing the total rate of fatty acid production. Possesses both acetoacetyl-ACP synthase and acetyl transacylase activities. Its substrate specificity determines the biosynthesis of branched-chain and/or straight-chain of fatty acids. This Chlamydia trachomatis serovar A (strain ATCC VR-571B / DSM 19440 / HAR-13) protein is Beta-ketoacyl-[acyl-carrier-protein] synthase III.